Reading from the N-terminus, the 203-residue chain is Holliday junction branch migration complex subunit RuvA (203 aa).

The segment at 1-64 (MIGRLNGILV…EDAQLLYGFI (64 aa)) is domain I. The tract at residues 65–143 (TKQERALFRL…SLLEASVGNE (79 aa)) is domain II. Residues 144–154 (REFMLQTNYTA) form a flexible linker region. Positions 155-203 (PAANAEEDAISALVSLGYKPPQASRAVSKAYKEGMDTETLIKLALKSML) are domain III.

The protein belongs to the RuvA family. In terms of assembly, homotetramer. Forms an RuvA(8)-RuvB(12)-Holliday junction (HJ) complex. HJ DNA is sandwiched between 2 RuvA tetramers; dsDNA enters through RuvA and exits via RuvB. An RuvB hexamer assembles on each DNA strand where it exits the tetramer. Each RuvB hexamer is contacted by two RuvA subunits (via domain III) on 2 adjacent RuvB subunits; this complex drives branch migration. In the full resolvosome a probable DNA-RuvA(4)-RuvB(12)-RuvC(2) complex forms which resolves the HJ.

Its subcellular location is the cytoplasm. Functionally, the RuvA-RuvB-RuvC complex processes Holliday junction (HJ) DNA during genetic recombination and DNA repair, while the RuvA-RuvB complex plays an important role in the rescue of blocked DNA replication forks via replication fork reversal (RFR). RuvA specifically binds to HJ cruciform DNA, conferring on it an open structure. The RuvB hexamer acts as an ATP-dependent pump, pulling dsDNA into and through the RuvAB complex. HJ branch migration allows RuvC to scan DNA until it finds its consensus sequence, where it cleaves and resolves the cruciform DNA. In Shewanella denitrificans (strain OS217 / ATCC BAA-1090 / DSM 15013), this protein is Holliday junction branch migration complex subunit RuvA.